Here is a 145-residue protein sequence, read N- to C-terminus: Secreted RxLR effector protein PSE1 (145 aa).

The N-terminal stretch at 1–21 is a signal peptide; it reads MRLSSFIVVGAAVVNLLTSGS. The RxLR-dEER motif lies at 53–73; sequence RLLRYHSNNNRGGDEDIAEER.

This sequence belongs to the RxLR effector family.

It localises to the secreted. It is found in the host cell. Its function is as follows. Secreted effector that impairs both plant effector-triggered immunity and pathogen-associated molecular patterns (PAMP)-triggered immunity (PTI). Suppresses plant cell death as a part of the plant defense responses. Facilitates plant infection by altering the auxin content at the roots penetration points of the of the pathogen. The polypeptide is Secreted RxLR effector protein PSE1 (Phytophthora nicotianae (Potato buckeye rot agent)).